The chain runs to 2134 residues: Genome polyprotein (2134 aa).

Topologically, residues 1–1377 (MSKLFSTVGK…WLFEKIKTSK (1377 aa)) are cytoplasmic. One can recognise an LRAT domain in the interval 781-882 (IVSCSGEKAK…GDYGTKEGEK (102 aa)). Active-site residues include histidine 791 and histidine 802. The active-site Acyl-thioester intermediate is cysteine 863. An SF3 helicase domain is found at 1127–1289 (LNKLGRLDKP…EEFSTHAMLD (163 aa)). An ATP-binding site is contributed by 1153-1160 (GNRGGGKS). An intramembrane segment occupies 1378–1392 (WYILGCVGAVLSVSV). The Cytoplasmic portion of the chain corresponds to 1393–2134 (LGVFAYHMIK…VKYRFIDDSF (742 aa)). Position 1415 is an O-(5'-phospho-RNA)-tyrosine (tyrosine 1415). The Peptidase C3 domain maps to 1431 to 1643 (DAQSVVDISN…ITKEMIEEML (213 aa)). Catalysis depends on for protease 3C activity residues histidine 1477, aspartate 1515, and cysteine 1603. The 122-residue stretch at 1880 to 2001 (DLVVGLDFSN…CIKKEYLDQK (122 aa)) folds into the RdRp catalytic domain.

This sequence belongs to the picornaviridae polyprotein family. Specific enzymatic cleavages by the viral protease in vivo yield a variety of precursors and mature proteins. During virion maturation, non-infectious particles are rendered infectious following cleavage of VP0. This maturation cleavage is followed by a conformational change of the particle. In terms of processing, VPg is uridylylated by the polymerase and is covalently linked to the 5'-end of genomic RNA. This uridylylated form acts as a nucleotide-peptide primer for the polymerase.

The protein resides in the virion. Its subcellular location is the host cytoplasm. It localises to the host cytoplasmic vesicle membrane. The catalysed reaction is RNA(n) + a ribonucleoside 5'-triphosphate = RNA(n+1) + diphosphate. It catalyses the reaction a ribonucleoside 5'-triphosphate + H2O = a ribonucleoside 5'-diphosphate + phosphate + H(+). It carries out the reaction Selective cleavage of Gln-|-Gly bond in the poliovirus polyprotein. In other picornavirus reactions Glu may be substituted for Gln, and Ser or Thr for Gly.. Functionally, capsid proteins VP1, VP2, and VP3 form a closed capsid enclosing the viral positive strand RNA genome. All these proteins contain a beta-sheet structure called beta-barrel jelly roll. Together they form an icosahedral capsid (T=3) composed of 60 copies of each VP1, VP2, and VP3, with a diameter of approximately 300 Angstroms. VP1 is situated at the 12 fivefold axes, whereas VP2 and VP3 are located at the quasi-sixfold axes. VP0 precursor is a component of immature procapsids. The N-terminal domain of VP0, protein VP4, is needed for the assembly of 12 pentamers into the icosahedral structure. Unlike other picornaviruses, AEV VP4 may not be myristoylated. In terms of biological role, protein 2B and 2BC precursor affect membrane integrity and cause an increase in membrane permeability. Its function is as follows. Associates with and induces structural rearrangements of intracellular membranes. It displays RNA-binding, nucleotide binding and NTPase activities. Functionally, protein 3A, via its hydrophobic domain, serves as membrane anchor. Protein 3B is covalently linked to the 5'-end of both the positive-strand and negative-strand genomic RNAs. It acts as a genome-linked replication primer. In terms of biological role, cysteine protease that generates mature viral proteins from the precursor polyprotein. In addition to its proteolytic activity, it binds to viral RNA, and thus influences viral genome replication. RNA and substrate bind cooperatively to the protease. Its function is as follows. RNA-directed RNA polymerase 3D-POL replicates genomic and antigenomic RNA by recognizing replications specific signals. The protein is Genome polyprotein of Avian encephalomyelitis virus (strain Calnek vaccine) (AEV).